The chain runs to 81 residues: Putative sulfur carrier protein VNG_5061C/VNG_5236C/VNG_6059C/VNG_6467C (81 aa).

The active-site Cysteine persulfide intermediate is the Cys-18.

The protein belongs to the sulfur carrier protein TusA family.

This chain is Putative sulfur carrier protein VNG_5061C/VNG_5236C/VNG_6059C/VNG_6467C, found in Halobacterium salinarum (strain ATCC 700922 / JCM 11081 / NRC-1) (Halobacterium halobium).